Reading from the N-terminus, the 250-residue chain is LOB domain-containing protein 37 (250 aa).

Residues 1 to 107 (MSCNGCRVLR…VETVLRGGSL (107 aa)) form the LOB domain. The interval 145-227 (DSTDRNIYHH…DSGTTTTTTA (83 aa)) is disordered. Positions 157 to 170 (FSSSRSRSTMDSSS) are enriched in low complexity.

The protein belongs to the LOB domain-containing protein family. In terms of tissue distribution, expressed in young shoots, roots, stems, leaves and flowers.

The sequence is that of LOB domain-containing protein 37 (LBD37) from Arabidopsis thaliana (Mouse-ear cress).